The primary structure comprises 193 residues: MSDTAPVSVPPVLPKSDLNFVWLDCEMTGLDPEKDRLLEIAVVVTGPELEPRVEGPVFAIHQSDALLDGMDAWNKGTHGRSGLIEKVRASTVTEAEAEQAILEFLARYVRKGVAPMCGNSIGQDRRFLVRYMPKLEAFFHYRNVDVSTLKELSRRWKPEVYASFKKAQKHTALADVHESIEELAHYRKHLLVP.

The Exonuclease domain maps to 20–183 (FVWLDCEMTG…ADVHESIEEL (164 aa)). Residue tyrosine 141 is part of the active site.

It belongs to the oligoribonuclease family.

Its subcellular location is the cytoplasm. In terms of biological role, 3'-to-5' exoribonuclease specific for small oligoribonucleotides. In Paracidovorax citrulli (strain AAC00-1) (Acidovorax citrulli), this protein is Oligoribonuclease.